The following is a 130-amino-acid chain: Putative pre-16S rRNA nuclease (130 aa).

This sequence belongs to the YqgF nuclease family.

The protein localises to the cytoplasm. Its function is as follows. Could be a nuclease involved in processing of the 5'-end of pre-16S rRNA. This is Putative pre-16S rRNA nuclease from Sulfurimonas denitrificans (strain ATCC 33889 / DSM 1251) (Thiomicrospira denitrificans (strain ATCC 33889 / DSM 1251)).